The sequence spans 297 residues: Probable endonuclease 4 (297 aa).

Zn(2+) contacts are provided by H68, H109, E144, D178, H181, H213, D226, H228, and E258.

This sequence belongs to the AP endonuclease 2 family. Zn(2+) is required as a cofactor.

It catalyses the reaction Endonucleolytic cleavage to 5'-phosphooligonucleotide end-products.. Its function is as follows. Endonuclease IV plays a role in DNA repair. It cleaves phosphodiester bonds at apurinic or apyrimidinic (AP) sites, generating a 3'-hydroxyl group and a 5'-terminal sugar phosphate. The protein is Probable endonuclease 4 of Lysinibacillus sphaericus (strain C3-41).